We begin with the raw amino-acid sequence, 370 residues long: Peptide chain release factor 1 (370 aa).

Q239 is modified (N5-methylglutamine).

This sequence belongs to the prokaryotic/mitochondrial release factor family. In terms of processing, methylated by PrmC. Methylation increases the termination efficiency of RF1.

It localises to the cytoplasm. Peptide chain release factor 1 directs the termination of translation in response to the peptide chain termination codons UAG and UAA. The chain is Peptide chain release factor 1 from Bacteroides fragilis (strain ATCC 25285 / DSM 2151 / CCUG 4856 / JCM 11019 / LMG 10263 / NCTC 9343 / Onslow / VPI 2553 / EN-2).